Consider the following 523-residue polypeptide: Transcription initiation factor TFIID subunit 4 (523 aa).

Disordered regions lie at residues 1 to 100 and 185 to 241; these read MSLP…AASD and ASVE…VQGG. A compositionally biased stretch (low complexity) spans 58–77; that stretch reads QMQPPRQPIQQQMQHFQSPS. Over residues 78–87 the composition is skewed to pro residues; it reads PMAPQGPPGT. A TAFH domain is found at 101–199; the sequence is DKNVTKCVRF…VNPPPGYVFN (99 aa). Over residues 204-213 the composition is skewed to pro residues; that stretch reads PGPPQPPPPQ. Residues 214-236 show a composition bias toward low complexity; the sequence is QQSQQQPPLEMRQIPNPNQIPPQ. The tract at residues 329 to 383 is histone-fold; sequence LKPDEVLNRITKRMMSSCSVEEEALVAISDAVESHLRELITLMAGVAEHRVESLR. Residues 333-382 are necessary and sufficient for interaction with oma-1; it reads EVLNRITKRMMSSCSVEEEALVAISDAVESHLRELITLMAGVAEHRVESL. The tract at residues 407-435 is disordered; the sequence is QEEELRESREKESLIRMSKNKNSGKETIE.

This sequence belongs to the TAF4 family. As to quaternary structure, component of the TFIID basal transcription factor complex, composed of TATA-box-binding protein tbp-1, and a number of TBP-associated factors (TAFs). Interacts (via histone-fold domain) with oma-1 (via histone-fold domain). May also interact with oma-2. Interacts (via histone-fold domain) with taf-12 (via the histone-fold domain).

The protein localises to the nucleus. It is found in the cytoplasm. Functionally, the TFIID basal transcription factor complex plays a major role in the initiation of RNA polymerase II (Pol II)-dependent transcription. TFIID recognizes and binds promoters via its subunit tbp-1, a TATA-box-binding protein, and promotes assembly of the pre-initiation complex (PIC). The TFIID complex consists of tbp-1 and TBP-associated factors (TAFs), including taf-4. Essential for early embryonic development, probably acting via activating transcription initiation by RNA polymerase II, as part of the TFIID complex. In early embryos, but not oocytes, remains, presumably inactive, in the cytoplasm as a result of binding to oma-1. Upon degradation of oma-1, taf-4 is released and bound by taf-12, and the taf-4/12 heterodimer translocates to the nucleus and transcriptional repression is relieved. Involved in lifespan extension in a manner dependent upon mitochondrial function. Plays a role in modulating polyribosome formation. The sequence is that of Transcription initiation factor TFIID subunit 4 from Caenorhabditis elegans.